Here is a 610-residue protein sequence, read N- to C-terminus: Zinc metalloproteinase-disintegrin-like 4a (610 aa).

The N-terminal stretch at 1–20 (MIQVLLVTISLAVFPYQGSS) is a signal peptide. Residues 21–189 (VILESGNVND…KKASQSNLTP (169 aa)) constitute a propeptide that is removed on maturation. The Peptidase M12B domain maps to 199–395 (KYVKLFLVAD…NMPQCILKKP (197 aa)). A glycan (N-linked (GlcNAc...) asparagine) is linked at Asn218. Asp286 is a Ca(2+) binding site. 3 disulfide bridges follow: Cys310/Cys390, Cys350/Cys374, and Cys352/Cys357. His335 contributes to the Zn(2+) binding site. Glu336 is an active-site residue. Zn(2+) contacts are provided by His339 and His345. Positions 390, 405, 408, 410, 412, 415, and 418 each coordinate Ca(2+). The Disintegrin domain occupies 403–488 (PAVCGNYFVE…AECTDSFQRN (86 aa)). Intrachain disulfides connect Cys406–Cys435, Cys417–Cys430, Cys419–Cys425, Cys429–Cys452, Cys443–Cys449, Cys448–Cys474, Cys461–Cys481, Cys468–Cys499, Cys492–Cys504, Cys511–Cys561, Cys526–Cys572, Cys539–Cys549, Cys556–Cys598, and Cys592–Cys603. Positions 467 to 469 (ECD) match the D/ECD-tripeptide motif.

This sequence belongs to the venom metalloproteinase (M12B) family. P-III subfamily. Zn(2+) serves as cofactor. As to expression, expressed by the venom gland.

It localises to the secreted. In terms of biological role, snake venom metalloproteinase that impairs hemostasis in the envenomed animal. This chain is Zinc metalloproteinase-disintegrin-like 4a, found in Crotalus adamanteus (Eastern diamondback rattlesnake).